The primary structure comprises 233 residues: Orotidine 5'-phosphate decarboxylase (233 aa).

Residues aspartate 9, lysine 31, 58-67 (DLKLHDIPNT), threonine 120, arginine 182, glutamine 191, glycine 211, and arginine 212 each bind substrate. Lysine 60 serves as the catalytic Proton donor.

This sequence belongs to the OMP decarboxylase family. Type 1 subfamily. Homodimer.

The enzyme catalyses orotidine 5'-phosphate + H(+) = UMP + CO2. Its pathway is pyrimidine metabolism; UMP biosynthesis via de novo pathway; UMP from orotate: step 2/2. Functionally, catalyzes the decarboxylation of orotidine 5'-monophosphate (OMP) to uridine 5'-monophosphate (UMP). This Listeria monocytogenes serotype 4b (strain CLIP80459) protein is Orotidine 5'-phosphate decarboxylase.